The chain runs to 161 residues: Phosphopantetheine adenylyltransferase (161 aa).

Ser-9 contacts substrate. ATP is bound by residues 9–10 (SF) and His-17. Residues Lys-41, Thr-73, and Arg-87 each contribute to the substrate site. Residues 88-90 (GIR), Glu-98, and 123-129 (YQYVSSS) contribute to the ATP site.

It belongs to the bacterial CoaD family. As to quaternary structure, homohexamer. It depends on Mg(2+) as a cofactor.

The protein localises to the cytoplasm. The catalysed reaction is (R)-4'-phosphopantetheine + ATP + H(+) = 3'-dephospho-CoA + diphosphate. It functions in the pathway cofactor biosynthesis; coenzyme A biosynthesis; CoA from (R)-pantothenate: step 4/5. Functionally, reversibly transfers an adenylyl group from ATP to 4'-phosphopantetheine, yielding dephospho-CoA (dPCoA) and pyrophosphate. The protein is Phosphopantetheine adenylyltransferase of Levilactobacillus brevis (strain ATCC 367 / BCRC 12310 / CIP 105137 / JCM 1170 / LMG 11437 / NCIMB 947 / NCTC 947) (Lactobacillus brevis).